The chain runs to 299 residues: S-formylglutathione hydrolase (299 aa).

Cu cation is bound by residues methionine 1 and histidine 140. Active-site charge relay system residues include serine 161, aspartate 241, and histidine 276.

The protein belongs to the esterase D family. In terms of assembly, monomer.

It is found in the cytoplasm. It carries out the reaction S-formylglutathione + H2O = formate + glutathione + H(+). Functionally, serine hydrolase involved in the detoxification of formaldehyde. This is S-formylglutathione hydrolase from Saccharomyces cerevisiae (strain ATCC 204508 / S288c) (Baker's yeast).